The sequence spans 412 residues: Circumsporozoite protein (412 aa).

An N-terminal signal peptide occupies residues 1-18 (MMRKLAILSVSSFLFVEA). The interval 69–328 (SRSLGENDDG…KNNNNEEPSD (260 aa)) is disordered. The segment covering 85-105 (NGREGKDEDKRDGNNEDNEKL) has biased composition (basic and acidic residues). Positions 104–111 (KLRKPKHK) are required for the binding to heparan sulfate proteoglycans (HSPGs) on the surface of host hepatocytes. Residues 112 to 116 (KLKQP) form a region I; contains the proteolytic cleavage site region. Residues 120 to 288 (NPDPNANPNV…PNANPNANPN (169 aa)) are compositionally biased toward low complexity. 41 repeat units span residues 123 to 126 (PNAN), 127 to 130 (PNVD), 131 to 134 (PNAN), 135 to 138 (PNVD), 139 to 142 (PNAN), 143 to 146 (PNVD), 147 to 150 (PNAN), 151 to 154 (PNAN), 155 to 158 (PNAN), 159 to 162 (PNAN), 163 to 166 (PNAN), 167 to 170 (PNAN), 171 to 174 (PNAN), 175 to 178 (PNAN), 179 to 182 (PNAN), 183 to 186 (PNAN), 187 to 190 (PNAN), 191 to 194 (PNAN), 195 to 198 (PNAN), 199 to 202 (PNAN), 203 to 206 (PNAN), 207 to 210 (PNVD), 211 to 214 (PNAN), 215 to 218 (PNAN), 219 to 222 (PNAN), 223 to 226 (PNAN), 227 to 230 (PNAN), 231 to 234 (PNAN), 235 to 238 (PNAN), 239 to 242 (PNAN), 243 to 246 (PNAN), 247 to 250 (PNAN), 251 to 254 (PNAN), 255 to 258 (PNAN), 259 to 262 (PNAN), 263 to 266 (PNAN), 267 to 270 (PNAN), 271 to 274 (PNAN), 275 to 278 (PNAN), 279 to 282 (PNAN), and 283 to 286 (PNAN). Positions 123 to 286 (PNANPNVDPN…ANPNANPNAN (164 aa)) are 41 X 4 AA tandem repeats of P-N-[AV]-[ND]. Over residues 289–304 (KNNQGNGQGHNMPNDP) the composition is skewed to polar residues. Residues 310–324 (ENANANNAVKNNNNE) show a composition bias toward low complexity. Positions 337 to 390 (KIKNSISTEWSPCSVTCGNGIQVRIKPGSANKPKDELDYENDIEKKICKMEKCS) constitute a TSP type-1 domain. Cystine bridges form between Cys349/Cys384 and Cys353/Cys389. Residue Thr352 is glycosylated (O-linked (Fuc) threonine). Cys389 is lipidated: GPI-anchor amidated cysteine. The propeptide at 390 to 412 (SSVFNVVNSSIGLIMVLSFLFLN) is removed in mature form.

Belongs to the plasmodium circumsporozoite protein family. During host cell invasion, proteolytically cleaved at the cell membrane in the region I by a papain-like cysteine protease of parasite origin. Cleavage is triggered by the sporozoite contact with highly sulfated heparan sulfate proteoglycans (HSPGs) present on the host hepatocyte cell surface. Cleavage exposes the TSP type-1 (TSR) domain and is required for productive invasion of host hepatocytes but not for adhesion to the host cell membrane. Cleavage is dispensable for sporozoite development in the oocyst, motility and for traversal of host and vector cells. In terms of processing, O-glycosylated; maybe by POFUT2.

The protein resides in the cell membrane. It is found in the cytoplasm. Essential sporozoite protein. In the mosquito vector, required for sporozoite development in the oocyst, migration through the vector hemolymph and entry into the vector salivary glands. In the vertebrate host, required for sporozoite migration through the host dermis and infection of host hepatocytes. Binds to highly sulfated heparan sulfate proteoglycans (HSPGs) on the surface of host hepatocytes. Functionally, in the vertebrate host, binds to highly sulfated heparan sulfate proteoglycans (HSPGs) on the surface of host hepatocytes and is required for sporozoite invasion of the host hepatocytes. The polypeptide is Circumsporozoite protein (Plasmodium falciparum).